Reading from the N-terminus, the 436-residue chain is Serine--tRNA ligase (436 aa).

L-serine is bound at residue 242–244 (TAE). Residue 273–275 (RSE) coordinates ATP. L-serine is bound at residue Glu-296. ATP is bound at residue 360–363 (EISS). Position 395 (Ser-395) interacts with L-serine.

The protein belongs to the class-II aminoacyl-tRNA synthetase family. Type-1 seryl-tRNA synthetase subfamily. In terms of assembly, homodimer. The tRNA molecule binds across the dimer.

The protein resides in the cytoplasm. It catalyses the reaction tRNA(Ser) + L-serine + ATP = L-seryl-tRNA(Ser) + AMP + diphosphate + H(+). The catalysed reaction is tRNA(Sec) + L-serine + ATP = L-seryl-tRNA(Sec) + AMP + diphosphate + H(+). The protein operates within aminoacyl-tRNA biosynthesis; selenocysteinyl-tRNA(Sec) biosynthesis; L-seryl-tRNA(Sec) from L-serine and tRNA(Sec): step 1/1. Catalyzes the attachment of serine to tRNA(Ser). Is also able to aminoacylate tRNA(Sec) with serine, to form the misacylated tRNA L-seryl-tRNA(Sec), which will be further converted into selenocysteinyl-tRNA(Sec). The chain is Serine--tRNA ligase from Polynucleobacter necessarius subsp. necessarius (strain STIR1).